The chain runs to 234 residues: Ubiquinone biosynthesis O-methyltransferase (234 aa).

Positions 36, 56, 77, and 125 each coordinate S-adenosyl-L-methionine.

This sequence belongs to the methyltransferase superfamily. UbiG/COQ3 family.

The enzyme catalyses a 3-demethylubiquinol + S-adenosyl-L-methionine = a ubiquinol + S-adenosyl-L-homocysteine + H(+). It catalyses the reaction a 3-(all-trans-polyprenyl)benzene-1,2-diol + S-adenosyl-L-methionine = a 2-methoxy-6-(all-trans-polyprenyl)phenol + S-adenosyl-L-homocysteine + H(+). It functions in the pathway cofactor biosynthesis; ubiquinone biosynthesis. Its function is as follows. O-methyltransferase that catalyzes the 2 O-methylation steps in the ubiquinone biosynthetic pathway. The chain is Ubiquinone biosynthesis O-methyltransferase from Actinobacillus pleuropneumoniae serotype 5b (strain L20).